The following is a 298-amino-acid chain: Porphobilinogen deaminase (298 aa).

S-(dipyrrolylmethanemethyl)cysteine is present on cysteine 239.

The protein belongs to the HMBS family. Monomer. The cofactor is dipyrromethane.

The enzyme catalyses 4 porphobilinogen + H2O = hydroxymethylbilane + 4 NH4(+). It participates in porphyrin-containing compound metabolism; protoporphyrin-IX biosynthesis; coproporphyrinogen-III from 5-aminolevulinate: step 2/4. Functionally, tetrapolymerization of the monopyrrole PBG into the hydroxymethylbilane pre-uroporphyrinogen in several discrete steps. The sequence is that of Porphobilinogen deaminase from Orientia tsutsugamushi (strain Boryong) (Rickettsia tsutsugamushi).